Reading from the N-terminus, the 124-residue chain is PEP-dependent dihydroxyacetone kinase 1, phosphoryl donor subunit DhaM (124 aa).

The region spanning 4 to 124 (PYGVVIISHS…AANLKTIEIK (121 aa)) is the PTS EIIA type-4 domain. His12 functions as the Tele-phosphohistidine intermediate in the catalytic mechanism.

The protein belongs to the PEP-utilizing enzyme family. As to quaternary structure, homodimer. The dihydroxyacetone kinase complex is composed of a homodimer of DhaM, a homodimer of DhaK and the subunit DhaL.

The protein localises to the cytoplasm. The catalysed reaction is dihydroxyacetone + phosphoenolpyruvate = dihydroxyacetone phosphate + pyruvate. Component of the dihydroxyacetone kinase complex, which is responsible for the phosphoenolpyruvate (PEP)-dependent phosphorylation of dihydroxyacetone. DhaM serves as the phosphoryl donor. Is phosphorylated by phosphoenolpyruvate in an EI- and HPr-dependent reaction, and a phosphorelay system on histidine residues finally leads to phosphoryl transfer to DhaL and dihydroxyacetone. This chain is PEP-dependent dihydroxyacetone kinase 1, phosphoryl donor subunit DhaM, found in Listeria innocua serovar 6a (strain ATCC BAA-680 / CLIP 11262).